The sequence spans 340 residues: N-acetyl-gamma-glutamyl-phosphate reductase (340 aa).

Cys-151 is a catalytic residue.

It belongs to the NAGSA dehydrogenase family. Type 1 subfamily.

It is found in the cytoplasm. The catalysed reaction is N-acetyl-L-glutamate 5-semialdehyde + phosphate + NADP(+) = N-acetyl-L-glutamyl 5-phosphate + NADPH + H(+). It functions in the pathway amino-acid biosynthesis; L-arginine biosynthesis; N(2)-acetyl-L-ornithine from L-glutamate: step 3/4. Its function is as follows. Catalyzes the NADPH-dependent reduction of N-acetyl-5-glutamyl phosphate to yield N-acetyl-L-glutamate 5-semialdehyde. In Aquifex aeolicus (strain VF5), this protein is N-acetyl-gamma-glutamyl-phosphate reductase.